The sequence spans 395 residues: Probable hercynylcysteine sulfoxide lyase (395 aa).

Residues 1–21 (MQDEAMRRSGANSPAGDSLAD) form a disordered region. At K220 the chain carries N6-(pyridoxal phosphate)lysine.

This sequence belongs to the class-V pyridoxal-phosphate-dependent aminotransferase family. EgtE subfamily. The cofactor is pyridoxal 5'-phosphate.

The catalysed reaction is S-(hercyn-2-yl)-L-cysteine S-oxide + AH2 + H(+) = ergothioneine + pyruvate + A + NH4(+). The protein operates within amino-acid biosynthesis; ergothioneine biosynthesis. Its function is as follows. Probably catalyzes the conversion of hercynylcysteine sulfoxide to ergothioneine. ERG is one of the major redox buffers which protects bacteria against redox stressors and antibiotics; loss of ERG or mycothiol (MSH, the other major redox buffer in this bacteria) leads to respiratory alterations and bioenergetic deficiencies that negatively impact virulence. This is Probable hercynylcysteine sulfoxide lyase from Mycobacterium tuberculosis (strain CDC 1551 / Oshkosh).